The following is a 329-amino-acid chain: Ceramide synthase hyl-2 (329 aa).

Residue asparagine 22 is glycosylated (N-linked (GlcNAc...) asparagine). The next 7 membrane-spanning stretches (helical) occupy residues 41–61, 95–115, 134–154, 162–182, 187–207, 221–241, and 270–290; these read VLTG…IFVP, ALYY…ESHL, VAWY…GILF, FWQM…SWTM, VGTL…VGKI, FAGV…FWII, and FIML…YILF. A TLC domain is found at 86–298; that stretch reads SRMAECAMRA…LFKIAYDTIQ (213 aa).

It belongs to the sphingosine N-acyltransferase family. Strong expression in the gut, the posterior bulb of the pharynx, the hypoderm, and unidentified cells of the head and the tail.

The protein resides in the membrane. It catalyses the reaction a very long-chain fatty acyl-CoA + a sphingoid base = an N-(very-long-chain fatty acyl)-sphingoid base + CoA + H(+). It carries out the reaction a fatty acyl-CoA + sphinganine = an N-acylsphinganine + CoA + H(+). The enzyme catalyses docosanoyl-CoA + sphinganine = N-docosanoylsphinganine + CoA + H(+). The catalysed reaction is sphinganine + tetradecanoyl-CoA = N-(tetradecanoyl)-sphinganine + CoA + H(+). It catalyses the reaction eicosanoyl-CoA + sphinganine = N-eicosanoylsphinganine + CoA + H(+). It carries out the reaction 15-methylhexadecasphinganine + a fatty acyl-CoA = an N-acyl-15-methylhexadecasphinganine + CoA + H(+). Its pathway is lipid metabolism; sphingolipid metabolism. Its function is as follows. Catalyzes the acylation of sphingoid bases to form ceramides, which are key players in cell signaling events such as tolerances to heat, oxidation, and ultraviolet stress. C.elegans contain specific sphingoid bases, which are unique or different in structure compared to the sphingoid bases found in other animals. Two examples of these distinctive compounds are: 15-methylhexadecasphinganine and 15-methylhexadecasphing-4-enine. Exhibits substrate preference for long and very long fatty acyl-coA chains (C20-23). Required for adaptation of the nematode to anoxia. Anoxia tolerance may require one or more of the ceramide species that are either specifically or preferentially synthesized by HYL-2, and seems to be affected by a pathway that is parallel to that involving daf-2. In Caenorhabditis elegans, this protein is Ceramide synthase hyl-2 (hyl-2).